The primary structure comprises 499 residues: Serine/threonine-protein kinase SSN3 (499 aa).

The segment at 1-21 is disordered; it reads MSHSNPPTGASGGPGSASASA. One can recognise a Protein kinase domain in the interval 61-442; it reads YQVIGFISSG…AAAALQHNFF (382 aa). Residues 67 to 75 and Lys-91 contribute to the ATP site; that span reads ISSGTYGRV. Catalysis depends on Asp-193, which acts as the Proton acceptor. Disordered stretches follow at residues 332–376 and 463–499; these read SASG…SAAA and RRVS…RVKE. The span at 365 to 376 shows a compositional bias: low complexity; the sequence is SSSSANSSSAAA. The segment covering 463–472 has biased composition (basic and acidic residues); the sequence is RRVSQEDNDI.

The protein belongs to the protein kinase superfamily. CMGC Ser/Thr protein kinase family. CDC2/CDKX subfamily. As to quaternary structure, component of the SRB8-11 complex, a regulatory module of the Mediator complex. Mg(2+) serves as cofactor.

The protein localises to the nucleus. It carries out the reaction L-seryl-[protein] + ATP = O-phospho-L-seryl-[protein] + ADP + H(+). It catalyses the reaction L-threonyl-[protein] + ATP = O-phospho-L-threonyl-[protein] + ADP + H(+). The catalysed reaction is [DNA-directed RNA polymerase] + ATP = phospho-[DNA-directed RNA polymerase] + ADP + H(+). Functionally, component of the SRB8-11 complex. The SRB8-11 complex is a regulatory module of the Mediator complex which is itself involved in regulation of basal and activated RNA polymerase II-dependent transcription. The SRB8-11 complex may be involved in the transcriptional repression of a subset of genes regulated by Mediator. It may inhibit the association of the Mediator complex with RNA polymerase II to form the holoenzyme complex. The SRB8-11 complex phosphorylates the C-terminal domain (CTD) of the largest subunit of RNA polymerase II. In Pyricularia oryzae (strain 70-15 / ATCC MYA-4617 / FGSC 8958) (Rice blast fungus), this protein is Serine/threonine-protein kinase SSN3 (SSN3).